We begin with the raw amino-acid sequence, 612 residues long: Sulfite reductase [NADPH] hemoprotein beta-component (612 aa).

Residues 1-32 form a disordered region; that stretch reads MDDHKPIDTPDGPAVDTPGIGAHRYEAPPTDR. The [4Fe-4S] cluster site is built by Cys-469, Cys-475, Cys-514, and Cys-518. Cys-518 contributes to the siroheme binding site.

It belongs to the nitrite and sulfite reductase 4Fe-4S domain family. In terms of assembly, alpha(8)-beta(8). The alpha component is a flavoprotein, the beta component is a hemoprotein. Siroheme is required as a cofactor. The cofactor is [4Fe-4S] cluster.

The enzyme catalyses hydrogen sulfide + 3 NADP(+) + 3 H2O = sulfite + 3 NADPH + 4 H(+). Its pathway is sulfur metabolism; hydrogen sulfide biosynthesis; hydrogen sulfide from sulfite (NADPH route): step 1/1. Component of the sulfite reductase complex that catalyzes the 6-electron reduction of sulfite to sulfide. This is one of several activities required for the biosynthesis of L-cysteine from sulfate. The polypeptide is Sulfite reductase [NADPH] hemoprotein beta-component (Methylorubrum populi (strain ATCC BAA-705 / NCIMB 13946 / BJ001) (Methylobacterium populi)).